The following is a 68-amino-acid chain: ATP synthase subunit c (68 aa).

2 consecutive transmembrane segments (helical) span residues 5–25 and 47–67; these read AAAI…GMIV and FIGV…AFMV.

Belongs to the ATPase C chain family. As to quaternary structure, F-type ATPases have 2 components, F(1) - the catalytic core - and F(0) - the membrane proton channel. F(1) has five subunits: alpha(3), beta(3), gamma(1), delta(1), epsilon(1). F(0) has three main subunits: a(1), b(2) and c(10-14). The alpha and beta chains form an alternating ring which encloses part of the gamma chain. F(1) is attached to F(0) by a central stalk formed by the gamma and epsilon chains, while a peripheral stalk is formed by the delta and b chains.

The protein localises to the cell membrane. In terms of biological role, f(1)F(0) ATP synthase produces ATP from ADP in the presence of a proton or sodium gradient. F-type ATPases consist of two structural domains, F(1) containing the extramembraneous catalytic core and F(0) containing the membrane proton channel, linked together by a central stalk and a peripheral stalk. During catalysis, ATP synthesis in the catalytic domain of F(1) is coupled via a rotary mechanism of the central stalk subunits to proton translocation. Functionally, key component of the F(0) channel; it plays a direct role in translocation across the membrane. A homomeric c-ring of between 10-14 subunits forms the central stalk rotor element with the F(1) delta and epsilon subunits. This Oceanobacillus iheyensis (strain DSM 14371 / CIP 107618 / JCM 11309 / KCTC 3954 / HTE831) protein is ATP synthase subunit c.